A 257-amino-acid chain; its full sequence is Hydroxyacylglutathione hydrolase (257 aa).

Zn(2+)-binding residues include His-54, His-56, Asp-58, His-59, His-113, Asp-137, and His-175.

Belongs to the metallo-beta-lactamase superfamily. Glyoxalase II family. In terms of assembly, monomer. The cofactor is Zn(2+).

It catalyses the reaction an S-(2-hydroxyacyl)glutathione + H2O = a 2-hydroxy carboxylate + glutathione + H(+). It participates in secondary metabolite metabolism; methylglyoxal degradation; (R)-lactate from methylglyoxal: step 2/2. Functionally, thiolesterase that catalyzes the hydrolysis of S-D-lactoyl-glutathione to form glutathione and D-lactic acid. The sequence is that of Hydroxyacylglutathione hydrolase from Acaryochloris marina (strain MBIC 11017).